A 397-amino-acid polypeptide reads, in one-letter code: Acetate kinase (397 aa).

N7 lines the Mg(2+) pocket. ATP is bound at residue K14. Position 90 (R90) interacts with substrate. The Proton donor/acceptor role is filled by D147. Residues 207–211 (HLGNG), 282–284 (DFR), and 330–334 (GLGEN) contribute to the ATP site. E383 contacts Mg(2+).

This sequence belongs to the acetokinase family. In terms of assembly, homodimer. The cofactor is Mg(2+). Requires Mn(2+) as cofactor.

It localises to the cytoplasm. It catalyses the reaction acetate + ATP = acetyl phosphate + ADP. It functions in the pathway metabolic intermediate biosynthesis; acetyl-CoA biosynthesis; acetyl-CoA from acetate: step 1/2. In terms of biological role, catalyzes the formation of acetyl phosphate from acetate and ATP. Can also catalyze the reverse reaction. The sequence is that of Acetate kinase from Clostridium botulinum (strain Okra / Type B1).